The chain runs to 494 residues: Protein nucleotidyltransferase YdiU (494 aa).

8 residues coordinate ATP: glycine 99, glycine 101, arginine 102, lysine 118, aspartate 130, glycine 131, arginine 181, and arginine 188. Aspartate 261 acts as the Proton acceptor in catalysis. Residues asparagine 262 and aspartate 271 each coordinate Mg(2+). An ATP-binding site is contributed by aspartate 271.

This sequence belongs to the SELO family. Mg(2+) is required as a cofactor. Requires Mn(2+) as cofactor.

It catalyses the reaction L-seryl-[protein] + ATP = 3-O-(5'-adenylyl)-L-seryl-[protein] + diphosphate. The enzyme catalyses L-threonyl-[protein] + ATP = 3-O-(5'-adenylyl)-L-threonyl-[protein] + diphosphate. The catalysed reaction is L-tyrosyl-[protein] + ATP = O-(5'-adenylyl)-L-tyrosyl-[protein] + diphosphate. It carries out the reaction L-histidyl-[protein] + UTP = N(tele)-(5'-uridylyl)-L-histidyl-[protein] + diphosphate. It catalyses the reaction L-seryl-[protein] + UTP = O-(5'-uridylyl)-L-seryl-[protein] + diphosphate. The enzyme catalyses L-tyrosyl-[protein] + UTP = O-(5'-uridylyl)-L-tyrosyl-[protein] + diphosphate. Nucleotidyltransferase involved in the post-translational modification of proteins. It can catalyze the addition of adenosine monophosphate (AMP) or uridine monophosphate (UMP) to a protein, resulting in modifications known as AMPylation and UMPylation. This is Protein nucleotidyltransferase YdiU from Variovorax paradoxus (strain S110).